The sequence spans 448 residues: Phosphoglucosamine mutase (448 aa).

Serine 100 acts as the Phosphoserine intermediate in catalysis. Mg(2+) contacts are provided by serine 100, aspartate 240, aspartate 242, and aspartate 244. Serine 100 carries the post-translational modification Phosphoserine.

Belongs to the phosphohexose mutase family. Mg(2+) is required as a cofactor. Activated by phosphorylation.

The enzyme catalyses alpha-D-glucosamine 1-phosphate = D-glucosamine 6-phosphate. In terms of biological role, catalyzes the conversion of glucosamine-6-phosphate to glucosamine-1-phosphate. In Bacillus mycoides (strain KBAB4) (Bacillus weihenstephanensis), this protein is Phosphoglucosamine mutase.